A 140-amino-acid chain; its full sequence is Required for drug-induced death protein 1 (140 aa).

A disordered region spans residues 1–95; that stretch reads MTVGARLRSK…DKPKKRYRRK (95 aa). A compositionally biased stretch (acidic residues) spans 29–53; the sequence is EETDAIVEHLEGEDEDPESQDCERE. The helical transmembrane segment at 118–140 threads the bilayer; that stretch reads LQGFAAAYSAPFGVATSVVSFVR.

It localises to the membrane. In terms of biological role, regulates drug efflux through modulation of ABCB1 localization and activity. The chain is Required for drug-induced death protein 1 from Rattus norvegicus (Rat).